The chain runs to 516 residues: D-alanine--D-alanyl carrier protein ligase (516 aa).

Residue 156 to 157 (TS) coordinates ATP. D-alanine is bound at residue Asp203. Position 298–303 (298–303 (NAYGPT)) interacts with ATP. Position 307 (Val307) interacts with D-alanine. ATP-binding positions include Asp389, 401–404 (YGGR), and Lys503. Lys503 contacts D-alanine.

Belongs to the ATP-dependent AMP-binding enzyme family. DltA subfamily.

The protein localises to the cytoplasm. It carries out the reaction holo-[D-alanyl-carrier protein] + D-alanine + ATP = D-alanyl-[D-alanyl-carrier protein] + AMP + diphosphate. The protein operates within cell wall biogenesis; lipoteichoic acid biosynthesis. Catalyzes the first step in the D-alanylation of lipoteichoic acid (LTA), the activation of D-alanine and its transfer onto the D-alanyl carrier protein (Dcp) DltC. In an ATP-dependent two-step reaction, forms a high energy D-alanyl-AMP intermediate, followed by transfer of the D-alanyl residue as a thiol ester to the phosphopantheinyl prosthetic group of the Dcp. D-alanylation of LTA plays an important role in modulating the properties of the cell wall in Gram-positive bacteria, influencing the net charge of the cell wall. This chain is D-alanine--D-alanyl carrier protein ligase, found in Streptococcus pneumoniae (strain ATCC 700669 / Spain 23F-1).